The following is a 311-amino-acid chain: AT-hook motif nuclear-localized protein 27 (311 aa).

The disordered stretch occupies residues 40–105 (HHHQHQQHQQ…KNKAKPPIIV (66 aa)). The segment covering 55–75 (DDSRESDHSNKDHHQQGRPDS) has biased composition (basic and acidic residues). The a.T hook DNA-binding region spans 86–98 (KRPRGRPPGSKNK). The PPC domain maps to 110-258 (PNALRSHVLE…EEGGGGGGGG (149 aa)). The segment at 178–183 (GRFEIL) is required for the binding to non-AHL interactors. Positions 246-311 (EEEEEGGGGG…GAGTPSRPPF (66 aa)) are disordered. Positions 252–262 (GGGGGGGGGGP) are enriched in gly residues. Over residues 263-277 (PQMQQAPSASPPSGV) the composition is skewed to low complexity. Positions 278–292 (TGQGQLGGNVGGYGF) are enriched in gly residues.

Homodimer. Interacts with AHL12, AHL25, AHL29, TCP4, TCP13, EF114, ATAF2/NAC081, histone H2B.1, histone H3.3 and histone H4. Expressed in the hypocotyl and the vascular tissue of seedling.

It localises to the nucleus. In terms of biological role, transcription factor that specifically binds AT-rich DNA sequences related to the nuclear matrix attachment regions (MARs). Negatively regulates plant innate immunity (PTI) to pathogens through the down-regulation of the PAMP-triggered FRK1 expression. Acts redundantly with AHL18, AHL22 and AHL29 in the regulation of flowering and regulation of the hypocotyl elongation. Acts as a chromatin remodeling factor that negatively regulates the leaf senescence. Acts redundantly with AHL29/SOB3 to modulate hypocotyl growth inhibition in response to light. The sequence is that of AT-hook motif nuclear-localized protein 27 from Arabidopsis thaliana (Mouse-ear cress).